The primary structure comprises 437 residues: Minor fimbrial subunit HifE (437 aa).

Residues 1-30 form the signal peptide; that stretch reads MNKKSYINHYLTLFKVTTLLFTLSSNPVWA.

It belongs to the fimbrial protein family.

It localises to the fimbrium. May be a minor structural protein required for pilus biogenesis. May be the adhesive component in the pili. The protein is Minor fimbrial subunit HifE (hifE) of Haemophilus influenzae.